The sequence spans 729 residues: Solute carrier family 15 member 2 (729 aa).

The interval 1 to 34 is disordered; it reads MNPFQKNESKETLFSPVSIEEVPPRPPSPPKKPS. Residues 1 to 57 are Cytoplasmic-facing; the sequence is MNPFQKNESKETLFSPVSIEEVPPRPPSPPKKPSPTICGSNYPLSIAFIVVNEFCER. Ser-9 is modified (phosphoserine). Thr-12 is modified (phosphothreonine). The span at 24-33 shows a compositional bias: pro residues; that stretch reads PRPPSPPKKP. A Phosphoserine modification is found at Ser-28. The helical transmembrane segment at 58–78 threads the bilayer; the sequence is FSYYGMKAVLILYFLYFLHWN. Topologically, residues 79–83 are extracellular; it reads EDTST. The chain crosses the membrane as a helical span at residues 84 to 104; it reads SIYHAFSSLCYFTPILGAAIA. The Cytoplasmic segment spans residues 105–113; sequence DSWLGKFKT. Residues 114–134 form a helical membrane-spanning segment; that stretch reads IIYLSLVYVLGHVIKSLGALP. The Extracellular portion of the chain corresponds to 135 to 139; it reads ILGGQ. A helical membrane pass occupies residues 140–160; that stretch reads VVHTVLSLIGLSLIALGTGGI. The Cytoplasmic portion of the chain corresponds to 161 to 183; the sequence is KPCVAAFGGDQFEEKHAEERTRY. A helical membrane pass occupies residues 184–204; sequence FSVFYLSINAGSLISTFITPM. Residues 205-217 lie on the Extracellular side of the membrane; that stretch reads LRGDVQCFGEDCY. The chain crosses the membrane as a helical span at residues 218 to 238; that stretch reads ALAFGVPGLLMVIALVVFAMG. Over 239 to 295 the chain is Cytoplasmic; sequence SKIYNKPPPEGNIVAQVFKCIWFAISNRFKNRSGDIPKRQHWLDWAAEKYPKQLIMD. A helical transmembrane segment spans residues 296–316; sequence VKALTRVLFLYIPLPMFWALL. Residues 317–343 are Extracellular-facing; it reads DQQGSRWTLQAIRMNRNLGFFVLQPDQ. The chain crosses the membrane as a helical span at residues 344–364; it reads MQVLNPLLVLIFIPLFDFVIY. Residues 365 to 380 are Cytoplasmic-facing; it reads RLVSKCGINFSSLRKM. A helical transmembrane segment spans residues 381–401; sequence AVGMILACLAFAVAAAVEIKI. Over 402–611 the chain is Extracellular; sequence NEMAPAQPGP…PANKMSIAWQ (210 aa). An extracellular domain (ECD) region spans residues 402 to 611; the sequence is NEMAPAQPGP…PANKMSIAWQ (210 aa). Residues Asn-435, Asn-472, Asn-528, Asn-567, and Asn-587 are each glycosylated (N-linked (GlcNAc...) asparagine). Residues 612–632 traverse the membrane as a helical segment; that stretch reads LPQYALVTAGEVMFSVTGLEF. The Cytoplasmic portion of the chain corresponds to 633 to 643; sequence SYSQAPSSMKS. Residues 644–664 form a helical membrane-spanning segment; the sequence is VLQAAWLLTIAVGNIIVLVVA. Over 665 to 674 the chain is Extracellular; it reads QFSGLVQWAE. The chain crosses the membrane as a helical span at residues 675-695; it reads FILFSCLLLVICLIFSIMGYY. Topologically, residues 696–729 are cytoplasmic; it reads YVPVKTEDMRGPADKHIPHIQGNMIKLETKKTKL.

Belongs to the major facilitator superfamily. Proton-dependent oligopeptide transporter (POT/PTR) (TC 2.A.17) family. Interacts (via extracellular domain region) with trypsin. Expressed in kidney. Not detected in intestine. Highly expressed in macrophages.

Its subcellular location is the apical cell membrane. It localises to the cytoplasmic vesicle. It is found in the phagosome membrane. The protein resides in the cell membrane. It carries out the reaction a dipeptide(out) + 2 H(+)(out) = a dipeptide(in) + 2 H(+)(in). It catalyses the reaction N-acetyl-D-muramoyl-L-alanyl-D-isoglutamine(out) + 3 H(+)(out) = N-acetyl-D-muramoyl-L-alanyl-D-isoglutamine(in) + 3 H(+)(in). The enzyme catalyses glycyl-L-leucine(out) + 2 H(+)(out) = glycyl-L-leucine(in) + 2 H(+)(in). The catalysed reaction is glycyl-L-lysine(out) + 2 H(+)(out) = glycyl-L-lysine(in) + 2 H(+)(in). It carries out the reaction glycyl-L-glutamate(out) + 3 H(+)(out) = glycyl-L-glutamate(in) + 3 H(+)(in). It catalyses the reaction L-alanyl-L-alanine(out) + 2 H(+)(out) = L-alanyl-L-alanine(in) + 2 H(+)(in). The enzyme catalyses an L-amino acid tripeptide(out) + 2 H(+)(out) = an L-amino acid tripeptide(in) + 2 H(+)(in). The catalysed reaction is carnosine(out) + 2 H(+)(out) = carnosine(in) + 2 H(+)(in). Proton-coupled amino-acid transporter that transports oligopeptides of 2 to 4 amino acids with a preference for dipeptides. Transports neutral and anionic dipeptides with a proton to peptide stoichiometry of 2:1 or 3:1. In kidney, involved in the absorption of circulating di- and tripeptides from the glomerular filtrate. Can also transport beta-lactam antibiotics, such as the aminocephalosporin cefadroxil, and other antiviral and anticancer drugs. Transports the dipeptide-like aminopeptidase inhibitor bestatin. Also able to transport carnosine. Involved in innate immunity by promoting the detection of microbial pathogens by NOD-like receptors (NLRs). Mediates transport of bacterial peptidoglycans across the plasma membrane or, in macrophages, the phagosome membrane: catalyzes the transport of certain bacterial peptidoglycans, such as muramyl dipeptide (MDP), the NOD2 ligand. The chain is Solute carrier family 15 member 2 from Homo sapiens (Human).